A 241-amino-acid chain; its full sequence is Probable transcriptional regulatory protein lmo1535 (241 aa).

Polar residues predominate over residues 1 to 14 (MSGHSKWNNIQGRK). The tract at residues 1–22 (MSGHSKWNNIQGRKNAQDSKRS) is disordered.

The protein belongs to the TACO1 family.

It localises to the cytoplasm. The polypeptide is Probable transcriptional regulatory protein lmo1535 (Listeria monocytogenes serovar 1/2a (strain ATCC BAA-679 / EGD-e)).